The sequence spans 210 residues: Glutathione S-transferase 3 (210 aa).

Positions 1-80 (MDFYYLPLSA…YLVEKYGKQN (80 aa)) constitute a GST N-terminal domain. Glutathione is bound by residues Ser-9, 50–52 (HTI), and 64–66 (ESR). The 122-residue stretch at 87–208 (CPKKRALINQ…AGCLEMKKYF (122 aa)) folds into the GST C-terminal domain.

It belongs to the GST superfamily. Theta family. Homodimer.

The catalysed reaction is RX + glutathione = an S-substituted glutathione + a halide anion + H(+). Functionally, conjugation of reduced glutathione to a wide number of exogenous and endogenous hydrophobic electrophiles. This chain is Glutathione S-transferase 3 (Gst3), found in Musca domestica (House fly).